The sequence spans 829 residues: Ectonucleotide pyrophosphatase/phosphodiesterase C27A7.1 (829 aa).

Residues 54 to 74 traverse the membrane as a helical; Signal-anchor for type II membrane protein segment; sequence VIGIAVLLLAMVVIVVIVLLL. Threonine 224 serves as the catalytic Nucleophile. N-linked (GlcNAc...) asparagine glycosylation is found at asparagine 296, asparagine 424, asparagine 514, asparagine 542, asparagine 582, asparagine 649, asparagine 733, and asparagine 748. Cysteine 439 and cysteine 782 form a disulfide bridge.

The protein belongs to the nucleotide pyrophosphatase/phosphodiesterase family.

The protein resides in the membrane. Functionally, probable phosphodiesterase. This is Ectonucleotide pyrophosphatase/phosphodiesterase C27A7.1 from Caenorhabditis elegans.